The sequence spans 259 residues: MWTWKADRPVAVIVIIHGASEYHGRYKWLIEMWRSSGYHVVMGDLPGQGTTTRARGHIRSFQEYIDEVDAWIDKARTFDLPVFLLGHSMGGLVAIEWVKQQRNPRITGIILSSPCLGLQIKVNKALDLASKGLNVIAPSLKVDSGLSIDMATRNEDVIEADQNDSLYVRKVSVRWYRELLKTIESAMVPTEAFLKVPLLVMQAGDDKLVDKTMVIKWFNGVASHNKAYREWEGLYHEIFNEPEREDVFKAARAFTDQYI.

Serine 88 serves as the catalytic Nucleophile. Catalysis depends on charge relay system residues aspartate 206 and histidine 236.

Belongs to the AB hydrolase superfamily.

The protein operates within antibiotic biosynthesis; bacilysocin biosynthesis. In terms of biological role, phospholipase involved in the biosynthesis of the antibiotic bacilysocin. It probably catalyzes the hydrolysis of the 2-sn-acyl moiety of phosphatidylglycerol to produce bacilysocin (lysophosphatidylglycerol). Is also able to catalyze the hydrolysis reaction of one acyl bond in phosphatidylcholine in vitro (actual cleavage point is unknown), resulting in lysophosphatidylcholine. The polypeptide is Phospholipase YtpA (ytpA) (Bacillus subtilis (strain 168)).